Consider the following 316-residue polypeptide: Ribosomal RNA small subunit methyltransferase H (316 aa).

S-adenosyl-L-methionine contacts are provided by residues 35-37 (SGH), aspartate 55, phenylalanine 84, aspartate 105, and glutamine 112.

It belongs to the methyltransferase superfamily. RsmH family.

The protein resides in the cytoplasm. The enzyme catalyses cytidine(1402) in 16S rRNA + S-adenosyl-L-methionine = N(4)-methylcytidine(1402) in 16S rRNA + S-adenosyl-L-homocysteine + H(+). In terms of biological role, specifically methylates the N4 position of cytidine in position 1402 (C1402) of 16S rRNA. This chain is Ribosomal RNA small subunit methyltransferase H, found in Streptococcus dysgalactiae subsp. equisimilis (strain GGS_124).